The chain runs to 143 residues: Transcriptional regulator MraZ (143 aa).

2 consecutive SpoVT-AbrB domains span residues E5–A47 and A76–K119.

It belongs to the MraZ family. Forms oligomers.

The protein localises to the cytoplasm. It is found in the nucleoid. The polypeptide is Transcriptional regulator MraZ (Finegoldia magna (strain ATCC 29328 / DSM 20472 / WAL 2508) (Peptostreptococcus magnus)).